The sequence spans 203 residues: Probable GTP-binding protein EngB (203 aa).

The 176-residue stretch at 21 to 196 folds into the EngB-type G domain; sequence GAPEIAFLGR…WKKIFEAAGT (176 aa). Residues 29–36, 55–59, 79–82, 146–149, and 175–177 each bind GTP; these read GRSNVGKS, GRTQT, DLPG, TKID, and FSA. 2 residues coordinate Mg(2+): serine 36 and threonine 57.

It belongs to the TRAFAC class TrmE-Era-EngA-EngB-Septin-like GTPase superfamily. EngB GTPase family. Mg(2+) serves as cofactor.

Necessary for normal cell division and for the maintenance of normal septation. This is Probable GTP-binding protein EngB from Koribacter versatilis (strain Ellin345).